A 689-amino-acid chain; its full sequence is DNA ligase (689 aa).

Residues 40–44 (DSEYD), 89–90 (SL), and glutamate 121 each bind NAD(+). Lysine 123 functions as the N6-AMP-lysine intermediate in the catalytic mechanism. Residues arginine 144, glutamate 179, lysine 295, and lysine 319 each contribute to the NAD(+) site. The Zn(2+) site is built by cysteine 413, cysteine 416, cysteine 431, and cysteine 437. One can recognise a BRCT domain in the interval 610–689 (REQNILTGKI…VEWLAFIKNA (80 aa)).

The protein belongs to the NAD-dependent DNA ligase family. LigA subfamily. Mg(2+) serves as cofactor. Requires Mn(2+) as cofactor.

It carries out the reaction NAD(+) + (deoxyribonucleotide)n-3'-hydroxyl + 5'-phospho-(deoxyribonucleotide)m = (deoxyribonucleotide)n+m + AMP + beta-nicotinamide D-nucleotide.. Functionally, DNA ligase that catalyzes the formation of phosphodiester linkages between 5'-phosphoryl and 3'-hydroxyl groups in double-stranded DNA using NAD as a coenzyme and as the energy source for the reaction. It is essential for DNA replication and repair of damaged DNA. In Rickettsia prowazekii (strain Madrid E), this protein is DNA ligase.